The chain runs to 637 residues: Limonene/alpha-pinene synthase, chloroplastic (637 aa).

The N-terminal 56 residues, 1 to 56 (MALLSIVSLQVPKSCGLKSLISSSNVQKALCISTAVPTLRMRRRQKALVINMKLTT), are a transit peptide targeting the chloroplast. Asp-388, Asp-392, and Asp-540 together coordinate Mg(2+). The short motif at 388–392 (DDMYD) is the DDXXD motif element.

Belongs to the terpene synthase family. Tpsd subfamily. Requires Mg(2+) as cofactor. Mn(2+) serves as cofactor. K(+) is required as a cofactor.

It is found in the plastid. The protein resides in the chloroplast. It catalyses the reaction (2E)-geranyl diphosphate = (4S)-limonene + diphosphate. The catalysed reaction is (2E)-geranyl diphosphate = (1S,5S)-alpha-pinene + diphosphate. The protein operates within terpene metabolism; oleoresin biosynthesis. In terms of biological role, involved in defensive oleoresin formation in conifers in response to insect attack or other injury. Involved in monoterpene (C10) olefins biosynthesis. The polypeptide is Limonene/alpha-pinene synthase, chloroplastic (ag11) (Abies grandis (Grand fir)).